The primary structure comprises 892 residues: Protein RRP6-like 3 (892 aa).

Residues 119–287 (YVWVETESQL…IADSLTTELK (169 aa)) form the 3'-5' exonuclease domain. The HRDC domain occupies 350 to 436 (SLNAEELVRK…CSHLDDIYKM (87 aa)). The tract at residues 785-811 (VDDSGDGTSEGDGAKELNDTQCNGNTL) is disordered.

Its subcellular location is the cytoplasm. It localises to the cytosol. This is Protein RRP6-like 3 from Arabidopsis thaliana (Mouse-ear cress).